Here is a 370-residue protein sequence, read N- to C-terminus: uncharacterized protein (370 aa).

Position 1 is an N-acetylmethionine (M1).

This sequence belongs to the ornithine cyclodeaminase/mu-crystallin family.

This is an uncharacterized protein from Saccharomyces cerevisiae (strain ATCC 204508 / S288c) (Baker's yeast).